We begin with the raw amino-acid sequence, 137 residues long: Large ribosomal subunit protein uL16 (137 aa).

The protein belongs to the universal ribosomal protein uL16 family. Part of the 50S ribosomal subunit.

In terms of biological role, binds 23S rRNA and is also seen to make contacts with the A and possibly P site tRNAs. This chain is Large ribosomal subunit protein uL16, found in Streptococcus thermophilus (strain CNRZ 1066).